Here is a 142-residue protein sequence, read N- to C-terminus: Large ribosomal subunit protein uL13 (142 aa).

This sequence belongs to the universal ribosomal protein uL13 family. As to quaternary structure, part of the 50S ribosomal subunit.

Functionally, this protein is one of the early assembly proteins of the 50S ribosomal subunit, although it is not seen to bind rRNA by itself. It is important during the early stages of 50S assembly. In Aeromonas salmonicida (strain A449), this protein is Large ribosomal subunit protein uL13.